Consider the following 363-residue polypeptide: Chorismate synthase (363 aa).

2 residues coordinate NADP(+): Arg-48 and Arg-54. FMN-binding positions include 125–127 (RSS), 237–238 (NA), Gly-277, 292–296 (KPTSS), and Arg-318.

Belongs to the chorismate synthase family. Homotetramer. The cofactor is FMNH2.

The catalysed reaction is 5-O-(1-carboxyvinyl)-3-phosphoshikimate = chorismate + phosphate. The protein operates within metabolic intermediate biosynthesis; chorismate biosynthesis; chorismate from D-erythrose 4-phosphate and phosphoenolpyruvate: step 7/7. Catalyzes the anti-1,4-elimination of the C-3 phosphate and the C-6 proR hydrogen from 5-enolpyruvylshikimate-3-phosphate (EPSP) to yield chorismate, which is the branch point compound that serves as the starting substrate for the three terminal pathways of aromatic amino acid biosynthesis. This reaction introduces a second double bond into the aromatic ring system. This Pseudomonas entomophila (strain L48) protein is Chorismate synthase.